A 172-amino-acid chain; its full sequence is Stellate protein CG33239/CG33241 (172 aa).

This sequence belongs to the casein kinase 2 subunit beta family. Interacts in vitro with the casein kinase 2 alpha subunit (CkII-alpha). The relevance of such interaction is however unclear in vivo. As to expression, probably not expressed in wild-type flies. In males lacking the Y chromosome, it is testis-specific and constitutes the main component of star-shaped crystals.

Unknown. In males lacking the Y chromosome, its strong overexpression leads to the appearance of proteinaceous star-shaped crystals in the primary spermatocytes causing meiotic drive, possibly by interfering with normal casein kinase 2 activity. The chain is Stellate protein CG33239/CG33241 (Ste:CG33239) from Drosophila melanogaster (Fruit fly).